We begin with the raw amino-acid sequence, 442 residues long: Glutamyl-tRNA reductase (442 aa).

Substrate contacts are provided by residues 49–52 (TCNR), Ser109, 114–116 (EGQ), and Gln120. The active-site Nucleophile is Cys50. 198–203 (GAGRMA) is a binding site for NADP(+). Residues 420–442 (MAAAQRLFDLPGDDADRDRSDAK) form a disordered region. The segment covering 433–442 (DADRDRSDAK) has biased composition (basic and acidic residues).

Belongs to the glutamyl-tRNA reductase family. As to quaternary structure, homodimer.

It carries out the reaction (S)-4-amino-5-oxopentanoate + tRNA(Glu) + NADP(+) = L-glutamyl-tRNA(Glu) + NADPH + H(+). It functions in the pathway porphyrin-containing compound metabolism; protoporphyrin-IX biosynthesis; 5-aminolevulinate from L-glutamyl-tRNA(Glu): step 1/2. It participates in porphyrin-containing compound metabolism; chlorophyll biosynthesis. Catalyzes the NADPH-dependent reduction of glutamyl-tRNA(Glu) to glutamate 1-semialdehyde (GSA). The chain is Glutamyl-tRNA reductase from Synechococcus sp. (strain RCC307).